The following is a 323-amino-acid chain: Lipoyl synthase (323 aa).

[4Fe-4S] cluster is bound by residues cysteine 56, cysteine 61, cysteine 67, cysteine 82, cysteine 86, cysteine 89, and serine 293. A Radical SAM core domain is found at tryptophan 68–alanine 282.

The protein belongs to the radical SAM superfamily. Lipoyl synthase family. [4Fe-4S] cluster is required as a cofactor.

It localises to the cytoplasm. The enzyme catalyses [[Fe-S] cluster scaffold protein carrying a second [4Fe-4S](2+) cluster] + N(6)-octanoyl-L-lysyl-[protein] + 2 oxidized [2Fe-2S]-[ferredoxin] + 2 S-adenosyl-L-methionine + 4 H(+) = [[Fe-S] cluster scaffold protein] + N(6)-[(R)-dihydrolipoyl]-L-lysyl-[protein] + 4 Fe(3+) + 2 hydrogen sulfide + 2 5'-deoxyadenosine + 2 L-methionine + 2 reduced [2Fe-2S]-[ferredoxin]. Its pathway is protein modification; protein lipoylation via endogenous pathway; protein N(6)-(lipoyl)lysine from octanoyl-[acyl-carrier-protein]: step 2/2. Functionally, catalyzes the radical-mediated insertion of two sulfur atoms into the C-6 and C-8 positions of the octanoyl moiety bound to the lipoyl domains of lipoate-dependent enzymes, thereby converting the octanoylated domains into lipoylated derivatives. In Acidothermus cellulolyticus (strain ATCC 43068 / DSM 8971 / 11B), this protein is Lipoyl synthase.